Consider the following 470-residue polypeptide: 5-hydroxytryptamine receptor 2A (470 aa).

Residues 1 to 80 (MDVLCEENTS…LQEKNWSALL (80 aa)) lie on the Extracellular side of the membrane. Residues Asn-8, Asn-38, Asn-44, Asn-51, Asn-54, and Asn-75 are each glycosylated (N-linked (GlcNAc...) asparagine). A helical transmembrane segment spans residues 81–97 (TAVVIILTIAGNILVIM). The Cytoplasmic portion of the chain corresponds to 98–111 (AVSLEKKLQNATNY). Residues 112 to 137 (FLMSLAIADMLLGFLVMPVSMLTILY) traverse the membrane as a helical segment. Residues 138–146 (GYRWPLPSK) lie on the Extracellular side of the membrane. A helical transmembrane segment spans residues 147 to 171 (LCAVWIYLDVLFSTASIMHLCAISL). Cysteines 148 and 227 form a disulfide. Asp-155 serves as a coordination point for serotonin. The DRY motif; important for ligand-induced conformation changes signature appears at 172-174 (DRY). Residues 172-191 (DRYVAIQNPIHHRRFNSRTK) lie on the Cytoplasmic side of the membrane. Residues 192-215 (AFLKIIAVWTISVGISMPIPVFGL) traverse the membrane as a helical segment. Topologically, residues 216 to 232 (QDDSKVFKEGSCLLADD) are extracellular. Residues 233–258 (NFVLIGSFVSFFIPLTIMVITYFLTI) form a helical membrane-spanning segment. Residues 259–321 (KSLQKEATLC…QSISNEQKAC (63 aa)) are Cytoplasmic-facing. Ser-280 is modified (phosphoserine). Residues 322–347 (KVLGIVFFLFVVMWCPFFITNIMAVI) traverse the membrane as a helical segment. Asn-342 is a serotonin binding site. Cys-348 and Cys-352 are joined by a disulfide. At 348-355 (CKESCNED) the chain is on the extracellular side. Residues 356–381 (VIGALLNVFVWIGYLSSAVNPLVYTL) form a helical membrane-spanning segment. Residues 375 to 379 (NPLVY) carry the NPxxY motif; important for ligand-induced conformation changes and signaling motif. The Cytoplasmic segment spans residues 382-470 (FNKTYRSAFS…NTVNEKVSCV (89 aa)). The interval 448-470 (GKQHSEDAPADNSNTVNEKVSCV) is disordered. A compositionally biased stretch (polar residues) spans 458-470 (DNSNTVNEKVSCV). Residues 468-470 (SCV) carry the PDZ-binding motif.

It belongs to the G-protein coupled receptor 1 family. In terms of assembly, interacts (via C-terminus) with MPDZ and PATJ. May interact (via C-terminus) with MPP3, PRDX6, DLG4, DLG1, CASK, APBA1 and MAGI2. Interacts with GRM2 and DRD2; this may affect signaling.

It localises to the cell membrane. Its subcellular location is the cell projection. The protein localises to the dendrite. It is found in the axon. The protein resides in the cytoplasmic vesicle. It localises to the membrane. Its subcellular location is the caveola. The protein localises to the presynapse. Its activity is regulated as follows. G-protein coupled receptor activity is regulated by lipids: oleamide increases HTR2A-mediated activity. In terms of biological role, G-protein coupled receptor for 5-hydroxytryptamine (serotonin). Also functions as a receptor for various drugs and psychoactive substances, including mescaline, psilocybin, 1-(2,5-dimethoxy-4-iodophenyl)-2-aminopropane (DOI) and lysergic acid diethylamide (LSD). Ligand binding causes a conformation change that triggers signaling via guanine nucleotide-binding proteins (G proteins) and modulates the activity of downstream effectors. HTR2A is coupled to G(q)/G(11) G alpha proteins and activates phospholipase C-beta, releasing diacylglycerol (DAG) and inositol 1,4,5-trisphosphate (IP3) second messengers that modulate the activity of phosphatidylinositol 3-kinase and promote the release of Ca(2+) ions from intracellular stores, respectively. Beta-arrestin family members inhibit signaling via G proteins and mediate activation of alternative signaling pathways. Affects neural activity, perception, cognition and mood. Plays a role in the regulation of behavior, including responses to anxiogenic situations and psychoactive substances. Plays a role in intestinal smooth muscle contraction, and may play a role in arterial vasoconstriction. This chain is 5-hydroxytryptamine receptor 2A (HTR2A), found in Sus scrofa (Pig).